A 126-amino-acid chain; its full sequence is Aspartate 1-decarboxylase (126 aa).

Catalysis depends on Ser25, which acts as the Schiff-base intermediate with substrate; via pyruvic acid. Residue Ser25 is modified to Pyruvic acid (Ser). A substrate-binding site is contributed by Thr57. Tyr58 serves as the catalytic Proton donor. Position 73 to 75 (73 to 75 (GAA)) interacts with substrate.

The protein belongs to the PanD family. In terms of assembly, heterooctamer of four alpha and four beta subunits. Requires pyruvate as cofactor. In terms of processing, is synthesized initially as an inactive proenzyme, which is activated by self-cleavage at a specific serine bond to produce a beta-subunit with a hydroxyl group at its C-terminus and an alpha-subunit with a pyruvoyl group at its N-terminus.

The protein localises to the cytoplasm. The catalysed reaction is L-aspartate + H(+) = beta-alanine + CO2. It functions in the pathway cofactor biosynthesis; (R)-pantothenate biosynthesis; beta-alanine from L-aspartate: step 1/1. Catalyzes the pyruvoyl-dependent decarboxylation of aspartate to produce beta-alanine. The protein is Aspartate 1-decarboxylase of Edwardsiella ictaluri (strain 93-146).